Consider the following 457-residue polypeptide: Argininosuccinate lyase (457 aa).

The protein belongs to the lyase 1 family. Argininosuccinate lyase subfamily.

It is found in the cytoplasm. The catalysed reaction is 2-(N(omega)-L-arginino)succinate = fumarate + L-arginine. The protein operates within amino-acid biosynthesis; L-arginine biosynthesis; L-arginine from L-ornithine and carbamoyl phosphate: step 3/3. This is Argininosuccinate lyase from Shewanella sediminis (strain HAW-EB3).